Reading from the N-terminus, the 143-residue chain is 3-hydroxyacyl-[acyl-carrier-protein] dehydratase FabZ (143 aa).

Histidine 48 is an active-site residue.

The protein belongs to the thioester dehydratase family. FabZ subfamily.

The protein localises to the cytoplasm. It catalyses the reaction a (3R)-hydroxyacyl-[ACP] = a (2E)-enoyl-[ACP] + H2O. Functionally, involved in unsaturated fatty acids biosynthesis. Catalyzes the dehydration of short chain beta-hydroxyacyl-ACPs and long chain saturated and unsaturated beta-hydroxyacyl-ACPs. This Roseiflexus castenholzii (strain DSM 13941 / HLO8) protein is 3-hydroxyacyl-[acyl-carrier-protein] dehydratase FabZ.